A 234-amino-acid polypeptide reads, in one-letter code: LexA repressor (234 aa).

Positions 26-46 (FDEMKTALELTSKSGIHRLIT) form a DNA-binding region, H-T-H motif. Residues Ser155 and Lys193 each act as for autocatalytic cleavage activity in the active site.

Belongs to the peptidase S24 family. As to quaternary structure, homodimer.

It catalyses the reaction Hydrolysis of Ala-|-Gly bond in repressor LexA.. Its function is as follows. Represses a number of genes involved in the response to DNA damage (SOS response), including recA and lexA. In the presence of single-stranded DNA, RecA interacts with LexA causing an autocatalytic cleavage which disrupts the DNA-binding part of LexA, leading to derepression of the SOS regulon and eventually DNA repair. The polypeptide is LexA repressor (Bartonella henselae (strain ATCC 49882 / DSM 28221 / CCUG 30454 / Houston 1) (Rochalimaea henselae)).